Consider the following 1199-residue polypeptide: DNA-directed RNA polymerase subunit beta' (1199 aa).

Zn(2+)-binding residues include C60, C62, C75, and C78. Residues D449, D451, and D453 each coordinate Mg(2+). The Zn(2+) site is built by C818, C892, C899, and C902.

It belongs to the RNA polymerase beta' chain family. As to quaternary structure, RNAP is composed of a core of 2 alpha, a beta and a beta' subunit. The core is associated with a delta subunit, and at least one of epsilon or omega. When a sigma factor is associated with the core the holoenzyme is formed, which can initiate transcription. Mg(2+) serves as cofactor. Zn(2+) is required as a cofactor.

The catalysed reaction is RNA(n) + a ribonucleoside 5'-triphosphate = RNA(n+1) + diphosphate. Functionally, DNA-dependent RNA polymerase catalyzes the transcription of DNA into RNA using the four ribonucleoside triphosphates as substrates. The protein is DNA-directed RNA polymerase subunit beta' of Bacillus subtilis (strain 168).